The sequence spans 393 residues: Ubiquitin-like modifier-activating enzyme 5 (393 aa).

G75, D96, K119, N142, and N175 together coordinate ATP. Residues C217 and C220 each contribute to the Zn(2+) site. The Glycyl thioester intermediate role is filled by C241. Residues C294 and C299 each contribute to the Zn(2+) site.

The protein belongs to the ubiquitin-activating E1 family. UBA5 subfamily.

Functionally, E1-like enzyme which activates UFM1. The protein is Ubiquitin-like modifier-activating enzyme 5 of Bombyx mori (Silk moth).